Here is a 1538-residue protein sequence, read N- to C-terminus: Pentafunctional AROM polypeptide (1538 aa).

Residues 1-384 (MGVPTKISIL…HEPRASTVSN (384 aa)) form a 3-dehydroquinate synthase region. NAD(+) contacts are provided by residues 44-46 (DTN), 81-84 (ESSK), 114-116 (GGV), and D119. R130 provides a ligand contact to 7-phospho-2-dehydro-3-deoxy-D-arabino-heptonate. 139-140 (TT) is an NAD(+) binding site. 7-phospho-2-dehydro-3-deoxy-D-arabino-heptonate contacts are provided by D146 and K152. K161 is a binding site for NAD(+). Position 162 (N162) interacts with 7-phospho-2-dehydro-3-deoxy-D-arabino-heptonate. NAD(+) is bound by residues 179 to 182 (FLNT) and N190. E194 contributes to the Zn(2+) binding site. Residues 194–197 (EVIK) and K250 contribute to the 7-phospho-2-dehydro-3-deoxy-D-arabino-heptonate site. E260 acts as the Proton acceptor; for 3-dehydroquinate synthase activity in catalysis. Residues 264–268 (RNLLN) and H271 contribute to the 7-phospho-2-dehydro-3-deoxy-D-arabino-heptonate site. H271 is a Zn(2+) binding site. Catalysis depends on H275, which acts as the Proton acceptor; for 3-dehydroquinate synthase activity. Residues H287 and K356 each contribute to the 7-phospho-2-dehydro-3-deoxy-D-arabino-heptonate site. Position 287 (H287) interacts with Zn(2+). Residues 397 to 842 (VSPGVPKGLD…WDCLSQTFKV (446 aa)) form an EPSP synthase region. C824 acts as the For EPSP synthase activity in catalysis. A shikimate kinase region spans residues 866–973 (ASIFIIGMRG…RRKQNTFFVS (108 aa)). An ATP-binding site is contributed by 872–879 (GMRGAGKT). Residues 974-1194 (LTLPDLGLAA…AAPGQLSARE (221 aa)) are 3-dehydroquinase. H1097 (proton acceptor; for 3-dehydroquinate dehydratase activity) is an active-site residue. Catalysis depends on K1125, which acts as the Schiff-base intermediate with substrate; for 3-dehydroquinate dehydratase activity. The segment at 1207 to 1538 (AKKFAVIGNP…YEHPVLNHSS (332 aa)) is shikimate dehydrogenase.

It in the N-terminal section; belongs to the sugar phosphate cyclases superfamily. Dehydroquinate synthase family. In the 2nd section; belongs to the EPSP synthase family. The protein in the 3rd section; belongs to the shikimate kinase family. This sequence in the 4th section; belongs to the type-I 3-dehydroquinase family. It in the C-terminal section; belongs to the shikimate dehydrogenase family. Homodimer. It depends on Zn(2+) as a cofactor.

The protein localises to the cytoplasm. The enzyme catalyses 7-phospho-2-dehydro-3-deoxy-D-arabino-heptonate = 3-dehydroquinate + phosphate. It carries out the reaction 3-dehydroquinate = 3-dehydroshikimate + H2O. It catalyses the reaction shikimate + NADP(+) = 3-dehydroshikimate + NADPH + H(+). The catalysed reaction is shikimate + ATP = 3-phosphoshikimate + ADP + H(+). The enzyme catalyses 3-phosphoshikimate + phosphoenolpyruvate = 5-O-(1-carboxyvinyl)-3-phosphoshikimate + phosphate. The protein operates within metabolic intermediate biosynthesis; chorismate biosynthesis; chorismate from D-erythrose 4-phosphate and phosphoenolpyruvate: step 2/7. It functions in the pathway metabolic intermediate biosynthesis; chorismate biosynthesis; chorismate from D-erythrose 4-phosphate and phosphoenolpyruvate: step 3/7. Its pathway is metabolic intermediate biosynthesis; chorismate biosynthesis; chorismate from D-erythrose 4-phosphate and phosphoenolpyruvate: step 4/7. It participates in metabolic intermediate biosynthesis; chorismate biosynthesis; chorismate from D-erythrose 4-phosphate and phosphoenolpyruvate: step 5/7. The protein operates within metabolic intermediate biosynthesis; chorismate biosynthesis; chorismate from D-erythrose 4-phosphate and phosphoenolpyruvate: step 6/7. Its function is as follows. The AROM polypeptide catalyzes 5 consecutive enzymatic reactions in prechorismate polyaromatic amino acid biosynthesis. The protein is Pentafunctional AROM polypeptide of Ajellomyces capsulatus (strain NAm1 / WU24) (Darling's disease fungus).